Reading from the N-terminus, the 1132-residue chain is SNF2 domain-containing protein CLASSY 4 (1132 aa).

4 disordered regions span residues 24-104 (NKSK…SKSF), 224-331 (LRGE…HHKK), 376-396 (DPVV…PRER), and 525-544 (PSVN…LPNR). A Nuclear localization signal motif is present at residues 47–54 (KRRVNMRD). A compositionally biased stretch (basic and acidic residues) spans 81 to 90 (EYPEGKRDDE). Positions 92–103 (VGSTSGNLQSKS) are enriched in polar residues. Low complexity predominate over residues 233-242 (SDEVVSLSSS). Residues 243–254 (SDDEEDPLEELG) show a composition bias toward acidic residues. The segment covering 255–269 (TDSREEVSGEDRDSG) has biased composition (basic and acidic residues). Acidic residues-rich tracts occupy residues 270-282 (ESDM…DSDS) and 291-309 (DSSD…EDEE). 3 stretches are compositionally biased toward basic and acidic residues: residues 310-326 (GGTR…SEKV), 376-392 (DPVV…EHGK), and 525-539 (PSVN…RKGD). Residues 603 to 796 (SVGVKGSGGC…SNVLCLARPA (194 aa)) enclose the Helicase ATP-binding domain. ATP is bound at residue 616–623 (HKAGTGKT). The DEAH box signature appears at 747-750 (DEGH). Residues 934–1087 (DFIRISGTVK…ELVFSSTNEK (154 aa)) form the Helicase C-terminal domain.

This sequence belongs to the SNF2/RAD54 helicase family. In terms of assembly, interacts with NRPD1.

Its subcellular location is the nucleus. Functionally, probable chromatin remodeling factor. This is SNF2 domain-containing protein CLASSY 4 (CLSY4) from Arabidopsis thaliana (Mouse-ear cress).